Here is a 1145-residue protein sequence, read N- to C-terminus: DNA mismatch repair protein msh-3 (1145 aa).

2 disordered regions span residues 1–183 and 857–879; these read MAGP…GAKT and SSSA…LAQL. A compositionally biased stretch (polar residues) spans 13-33; it reads ASISSFFTPRNTSPLVNLSQN. A compositionally biased stretch (basic and acidic residues) spans 121–131; sequence AERKKKEELHR. Residues 158–169 are compositionally biased toward acidic residues; sequence GEGEEGEDDEEE. A mispair-binding domain region spans residues 183-307; it reads TGKLTPMELQ…RKLTNVYTKG (125 aa). An ATP-binding site is contributed by 882 to 889; sequence GPNMGGKS. The tract at residues 1030 to 1056 is disordered; that stretch reads KSRTSMDDDAMEVDGDGDGQEGAGADK. A compositionally biased stretch (acidic residues) spans 1036-1048; it reads DDDAMEVDGDGDG.

The protein belongs to the DNA mismatch repair MutS family. MSH3 subfamily. In terms of assembly, heterodimer consisting of msh-2-msh-3 (MutS beta). Forms a ternary complex with MutL alpha (mlh-1-pms-1).

It localises to the nucleus. Functionally, component of the post-replicative DNA mismatch repair system (MMR). Heterodimerizes with msh-2 to form MutS beta, which binds to DNA mismatches thereby initiating DNA repair. Msh-3 provides substrate-binding and substrate specificity to the complex. When bound, the MutS beta heterodimer bends the DNA helix and shields approximately 20 base pairs. Acts mainly to repair insertion-deletion loops (IDLs) from 2 to 13 nucleotides in size, but can also repair base-base and single insertion-deletion mismatches that occur during replication. After mismatch binding, forms a ternary complex with the MutL alpha heterodimer, which is thought to be responsible for directing the downstream MMR events, including strand discrimination, excision, and resynthesis. ATP binding and hydrolysis play a pivotal role in mismatch repair functions. This Neurospora crassa (strain ATCC 24698 / 74-OR23-1A / CBS 708.71 / DSM 1257 / FGSC 987) protein is DNA mismatch repair protein msh-3 (msh-3).